Reading from the N-terminus, the 289-residue chain is Ketose 3-epimerase (289 aa).

Residue Glu146 is the Proton donor/acceptor of the active site. Glu146 is a binding site for Mn(2+). Substrate contacts are provided by residues Glu152 and 179-182; that span reads DTYH. Residues Asp179 and His205 each contribute to the Mn(2+) site. A substrate-binding site is contributed by Arg211. Glu240 serves as the catalytic Proton donor/acceptor. Glu240 is a binding site for Mn(2+).

It belongs to the hyi family. As to quaternary structure, homotetramer. The cofactor is Mg(2+). Mn(2+) serves as cofactor. It depends on Co(2+) as a cofactor.

The enzyme catalyses L-ribulose = L-xylulose. It carries out the reaction D-allulose = keto-D-fructose. The catalysed reaction is keto-L-tagatose = keto-L-sorbose. It catalyses the reaction D-ribulose = D-xylulose. The enzyme catalyses L-allulose = keto-L-fructose. It carries out the reaction keto-D-tagatose = keto-D-sorbose. Its function is as follows. Catalyzes the reversible C-3 epimerization of several ketoses. Shows the highest enzymatic activity for the epimerization of L-ribulose to L-xylulose. Is also able to convert D-allulose (also known as D-psicose) to D-fructose and, to a lesser extent, L-tagatose to L-sorbose, D-ribulose to D-xylulose, L-allulose to L-fructose and D-tagatose to D-sorbose. The protein is Ketose 3-epimerase of Arthrobacter globiformis.